A 156-amino-acid chain; its full sequence is Lipoprotein signal peptidase (156 aa).

3 consecutive transmembrane segments (helical) span residues 5-25 (FKFI…DQWV), 64-84 (YLHL…KTLL), and 89-109 (IAFG…FIHG). Active-site residues include D113 and D130. Residues 122–142 (NFAIFNVADVMINISVALILI) form a helical membrane-spanning segment.

The protein belongs to the peptidase A8 family.

Its subcellular location is the cell inner membrane. The catalysed reaction is Release of signal peptides from bacterial membrane prolipoproteins. Hydrolyzes -Xaa-Yaa-Zaa-|-(S,diacylglyceryl)Cys-, in which Xaa is hydrophobic (preferably Leu), and Yaa (Ala or Ser) and Zaa (Gly or Ala) have small, neutral side chains.. Its pathway is protein modification; lipoprotein biosynthesis (signal peptide cleavage). This protein specifically catalyzes the removal of signal peptides from prolipoproteins. This is Lipoprotein signal peptidase from Campylobacter jejuni subsp. jejuni serotype O:6 (strain 81116 / NCTC 11828).